A 134-amino-acid chain; its full sequence is ATP synthase epsilon chain, chloroplastic (134 aa).

The protein belongs to the ATPase epsilon chain family. As to quaternary structure, F-type ATPases have 2 components, CF(1) - the catalytic core - and CF(0) - the membrane proton channel. CF(1) has five subunits: alpha(3), beta(3), gamma(1), delta(1), epsilon(1). CF(0) has three main subunits: a, b and c.

The protein resides in the plastid. It localises to the chloroplast thylakoid membrane. In terms of biological role, produces ATP from ADP in the presence of a proton gradient across the membrane. The sequence is that of ATP synthase epsilon chain, chloroplastic from Chlorella vulgaris (Green alga).